The sequence spans 555 residues: Glutamine--tRNA ligase (555 aa).

A 'HIGH' region motif is present at residues 35–45 (PEPNGYLHIGH). ATP contacts are provided by residues 36-38 (EPN) and 42-48 (HIGHAKS). L-glutamine-binding residues include D68 and Y213. ATP is bound by residues T232 and 262–263 (RL). Residues 269 to 273 (ITSKR) carry the 'KMSKS' region motif.

It belongs to the class-I aminoacyl-tRNA synthetase family. In terms of assembly, monomer.

It is found in the cytoplasm. The catalysed reaction is tRNA(Gln) + L-glutamine + ATP = L-glutaminyl-tRNA(Gln) + AMP + diphosphate. This is Glutamine--tRNA ligase from Stutzerimonas stutzeri (strain A1501) (Pseudomonas stutzeri).